A 366-amino-acid chain; its full sequence is 5-hydroxytryptamine receptor 1F (366 aa).

Topologically, residues 1-24 are extracellular; the sequence is MDFLNSSDQNLTSEELLNRMPSKI. N-linked (GlcNAc...) asparagine glycans are attached at residues Asn5 and Asn10. A helical transmembrane segment spans residues 25-49; that stretch reads LVSLTLSGLALMTTTINCLVITAII. The Cytoplasmic portion of the chain corresponds to 50–59; that stretch reads VTRKLHHPAN. The chain crosses the membrane as a helical span at residues 60–81; that stretch reads YLICSLAVTDFLVAVLVMPFSI. Over 82 to 96 the chain is Extracellular; sequence VYIVRESWIMGQGLC. Cys96 and Cys172 are disulfide-bonded. The chain crosses the membrane as a helical span at residues 97–119; it reads DLWLSVDIICCTCSILHLSAIAL. The serotonin site is built by Asp103 and Cys107. A DRY motif; important for ligand-induced conformation changes motif is present at residues 120–122; sequence DRY. Residues 120–139 lie on the Cytoplasmic side of the membrane; that stretch reads DRYRAITDAVEYARKRTPRH. A helical transmembrane segment spans residues 140–159; it reads AGITITTVWVISVFISVPPL. At 160–178 the chain is on the extracellular side; it reads FWRHQGNSRDDQCIIKHDH. A helical membrane pass occupies residues 179-202; it reads IVSTIYSTFGAFYIPLVLILILYY. The Cytoplasmic portion of the chain corresponds to 203 to 291; that stretch reads KIYRAARTLY…KISGTRERKA (89 aa). The chain crosses the membrane as a helical span at residues 292-315; the sequence is ATTLGLILGAFVICWLPFFVKELV. Residues 316-327 lie on the Extracellular side of the membrane; that stretch reads VNICEKCKISEE. Residues 328 to 350 form a helical membrane-spanning segment; that stretch reads MSNFLAWLGYLNSLINPLIYTIF. Positions 343 to 347 match the NPxxY motif; important for ligand-induced conformation changes and signaling motif; the sequence is NPLIY. Residues 351–366 are Cytoplasmic-facing; that stretch reads NEDFKKAFQKLVRCRN.

The protein belongs to the G-protein coupled receptor 1 family.

It is found in the cell membrane. Its function is as follows. G-protein coupled receptor for 5-hydroxytryptamine (serotonin). Also functions as a receptor for various alkaloids and psychoactive substances. Ligand binding causes a conformation change that triggers signaling via guanine nucleotide-binding proteins (G proteins) and modulates the activity of downstream effectors, such as adenylate cyclase. HTR1F is coupled to G(i)/G(o) G alpha proteins and mediates inhibitory neurotransmission by inhibiting adenylate cyclase activity. The protein is 5-hydroxytryptamine receptor 1F (Htr1f) of Rattus norvegicus (Rat).